The sequence spans 1935 residues: Myosin heavy chain, fast skeletal muscle (1935 aa).

The 50-residue stretch at 32 to 81 (DAKTAFFVVDPDEMYLKGTLVSKEGGKATVKTHSGKTVTVKEDEIFPMNP) folds into the Myosin N-terminal SH3-like domain. A Myosin motor domain is found at 85–779 (DKIEDMAMMT…LLGALEEMRD (695 aa)). K129 is modified (N6,N6,N6-trimethyllysine). 178-185 (GESGAGKT) is an ATP binding site. Actin-binding stretches follow at residues 659–681 (LMTN…ESKT) and 761–775 (HTKV…GALE). The 30-residue stretch at 782 to 811 (LALLVTMTQALCRGYVMRKEFVKMMERRES) folds into the IQ domain. The interval 812-839 (IYSIQYNIRSFMNVKHWPWMKLYFKIKP) is hinge. Residues 840–1935 (LLKSAETEKE…RDAGKSKDEE (1096 aa)) adopt a coiled-coil conformation. Disordered regions lie at residues 1589 to 1608 (RNSQ…EVRS) and 1902 to 1935 (HELE…KDEE). Positions 1592–1603 (QRVIDSMQSTLD) are enriched in polar residues. Composition is skewed to basic and acidic residues over residues 1902-1913 (HELEEAQERADV) and 1924-1935 (KSRDAGKSKDEE).

Belongs to the TRAFAC class myosin-kinesin ATPase superfamily. Myosin family. In terms of assembly, muscle myosin is a hexameric protein that consists of 2 heavy chain subunits (MHC), 2 alkali light chain subunits (MLC) and 2 regulatory light chain subunits (MLC-2).

Its subcellular location is the cytoplasm. It localises to the myofibril. Functionally, muscle contraction. This chain is Myosin heavy chain, fast skeletal muscle, found in Cyprinus carpio (Common carp).